We begin with the raw amino-acid sequence, 398 residues long: DNA-directed RNA polymerase III subunit RPC4 (398 aa).

Residues 1 to 149 are disordered; that stretch reads MSEGNAAGEP…IKKEKRETDE (149 aa). At Ser2 the chain carries N-acetylserine. Ser42 carries the post-translational modification Phosphoserine. Basic and acidic residues-rich tracts occupy residues 66–100, 116–128, and 140–149; these read KIKEEPKEEVTMKKEKRERDRDRQREGHGRGRGRP, MMKKKGNWDKTVD, and IKKEKRETDE. Residues Lys68 and Lys78 each participate in a glycyl lysine isopeptide (Lys-Gly) (interchain with G-Cter in SUMO2) cross-link. Residues Arg95, Arg97, and Arg99 each carry the omega-N-methylarginine modification. Glycyl lysine isopeptide (Lys-Gly) (interchain with G-Cter in SUMO2) cross-links involve residues Lys141, Lys152, Lys160, Lys190, Lys199, Lys206, Lys220, Lys285, Lys302, and Lys396. The disordered stretch occupies residues 191–244; it reads EESEEPEAKPFSAGPKEEDMEVDVPAVKVKEEPRDEEEEAKVKAPPRAARKTPG.

The protein belongs to the eukaryotic RPC4/POLR3D RNA polymerase subunit family. Component of the RNA polymerase III complex consisting of 17 subunits: a ten-subunit horseshoe-shaped catalytic core composed of POLR3A/RPC1, POLR3B/RPC2, POLR1C/RPAC1, POLR1D/RPAC2, POLR3K/RPC10, POLR2E/RPABC1, POLR2F/RPABC2, POLR2H/RPABC3, POLR2K/RPABC4 and POLR2L/RPABC5; a mobile stalk composed of two subunits POLR3H/RPC8 and CRCP/RPC9, protruding from the core and functioning primarily in transcription initiation; and additional subunits homologous to general transcription factors of the RNA polymerase II machinery, POLR3C/RPC3-POLR3F/RPC6-POLR3G/RPC7 heterotrimer required for transcription initiation and POLR3D/RPC4-POLR3E/RPC5 heterodimer involved in both transcription initiation and termination. Post-translationally, sumoylation on Lys-141 can serve as a signal to mark misfolded Pol III for proteasomal degradation.

The protein resides in the nucleus. DNA-dependent RNA polymerase catalyzes the transcription of DNA into RNA using the four ribonucleoside triphosphates as substrates. Specific peripheric component of RNA polymerase III (Pol III) which synthesizes small non-coding RNAs including 5S rRNA, snRNAs, tRNAs and miRNAs from at least 500 distinct genomic loci. Enables recruitment of Pol III at transcription initiation site and drives transcription initiation from both type 2 and type 3 DNA promoters. Required for efficient transcription termination and reinitiation. Pol III plays a key role in sensing and limiting infection by intracellular bacteria and DNA viruses. Acts as nuclear and cytosolic DNA sensor involved in innate immune response. Can sense non-self dsDNA that serves as template for transcription into dsRNA. The non-self RNA polymerase III transcripts, such as Epstein-Barr virus-encoded RNAs (EBERs) induce type I interferon and NF-kappa-B through the RIG-I pathway. The polypeptide is DNA-directed RNA polymerase III subunit RPC4 (Mus musculus (Mouse)).